Reading from the N-terminus, the 620-residue chain is 1-deoxy-D-xylulose-5-phosphate synthase (620 aa).

Thiamine diphosphate contacts are provided by residues His-80 and 121–123 (GHS). Asp-152 provides a ligand contact to Mg(2+). Thiamine diphosphate is bound by residues 153 to 154 (GA), Asn-181, Tyr-288, and Glu-370. Residue Asn-181 participates in Mg(2+) binding.

The protein belongs to the transketolase family. DXPS subfamily. Homodimer. The cofactor is Mg(2+). It depends on thiamine diphosphate as a cofactor.

It catalyses the reaction D-glyceraldehyde 3-phosphate + pyruvate + H(+) = 1-deoxy-D-xylulose 5-phosphate + CO2. Its pathway is metabolic intermediate biosynthesis; 1-deoxy-D-xylulose 5-phosphate biosynthesis; 1-deoxy-D-xylulose 5-phosphate from D-glyceraldehyde 3-phosphate and pyruvate: step 1/1. Catalyzes the acyloin condensation reaction between C atoms 2 and 3 of pyruvate and glyceraldehyde 3-phosphate to yield 1-deoxy-D-xylulose-5-phosphate (DXP). This is 1-deoxy-D-xylulose-5-phosphate synthase from Pseudoalteromonas translucida (strain TAC 125).